The chain runs to 623 residues: Ciliated left-right organizer metallopeptidase (623 aa).

Positions 1-20 (MSFLLCIGILLLPWFPCVCG) are cleaved as a signal peptide. Residues 21–578 (KCIFDQIQRS…LFLVSEAKIS (558 aa)) lie on the Extracellular side of the membrane. Zn(2+) is bound at residue His249. Glu250 is an active-site residue. Positions 253 and 326 each coordinate Zn(2+). The chain crosses the membrane as a helical span at residues 579-599 (LAAVLSLMAVFALLSAAVLLY). The Cytoplasmic portion of the chain corresponds to 600–623 (RKNLSVRVHAASYRTPLPHILYRN).

This sequence belongs to the peptidase M8 family. Requires Zn(2+) as cofactor. As to expression, expressed specifically in dorsal forerunner cells (DFCs) that form a ciliated Kupffer's vesicle later.

The protein resides in the membrane. In terms of biological role, plays an essential role for patterning the left-right axis. Requires solely on the left side, downstream of the leftward flow, but upstream of dand5, a nodal inhibitor involved in left-right patterning. This is Ciliated left-right organizer metallopeptidase (cirop) from Danio rerio (Zebrafish).